The chain runs to 248 residues: Probable transcriptional regulatory protein Mchl_0946 (248 aa).

The protein belongs to the TACO1 family.

Its subcellular location is the cytoplasm. This is Probable transcriptional regulatory protein Mchl_0946 from Methylorubrum extorquens (strain CM4 / NCIMB 13688) (Methylobacterium extorquens).